The following is a 339-amino-acid chain: Holliday junction branch migration complex subunit RuvB (339 aa).

Residues 1–187 (MQGFEDENRI…FGVICKLDYY (187 aa)) are large ATPase domain (RuvB-L). ATP contacts are provided by residues leucine 26, arginine 27, glycine 68, lysine 71, threonine 72, threonine 73, 134 to 136 (EDF), arginine 177, tyrosine 187, and arginine 224. Residue threonine 72 participates in Mg(2+) binding. The small ATPAse domain (RuvB-S) stretch occupies residues 188–258 (TVDELSKIVL…VAKDALELLG (71 aa)). The segment at 261–339 (SLGLDFVDEK…HLKIPYPNEK (79 aa)) is head domain (RuvB-H). The DNA site is built by arginine 297, arginine 316, and arginine 321.

Belongs to the RuvB family. Homohexamer. Forms an RuvA(8)-RuvB(12)-Holliday junction (HJ) complex. HJ DNA is sandwiched between 2 RuvA tetramers; dsDNA enters through RuvA and exits via RuvB. An RuvB hexamer assembles on each DNA strand where it exits the tetramer. Each RuvB hexamer is contacted by two RuvA subunits (via domain III) on 2 adjacent RuvB subunits; this complex drives branch migration. In the full resolvosome a probable DNA-RuvA(4)-RuvB(12)-RuvC(2) complex forms which resolves the HJ.

The protein resides in the cytoplasm. It carries out the reaction ATP + H2O = ADP + phosphate + H(+). Its function is as follows. The RuvA-RuvB-RuvC complex processes Holliday junction (HJ) DNA during genetic recombination and DNA repair, while the RuvA-RuvB complex plays an important role in the rescue of blocked DNA replication forks via replication fork reversal (RFR). RuvA specifically binds to HJ cruciform DNA, conferring on it an open structure. The RuvB hexamer acts as an ATP-dependent pump, pulling dsDNA into and through the RuvAB complex. RuvB forms 2 homohexamers on either side of HJ DNA bound by 1 or 2 RuvA tetramers; 4 subunits per hexamer contact DNA at a time. Coordinated motions by a converter formed by DNA-disengaged RuvB subunits stimulates ATP hydrolysis and nucleotide exchange. Immobilization of the converter enables RuvB to convert the ATP-contained energy into a lever motion, pulling 2 nucleotides of DNA out of the RuvA tetramer per ATP hydrolyzed, thus driving DNA branch migration. The RuvB motors rotate together with the DNA substrate, which together with the progressing nucleotide cycle form the mechanistic basis for DNA recombination by continuous HJ branch migration. Branch migration allows RuvC to scan DNA until it finds its consensus sequence, where it cleaves and resolves cruciform DNA. The polypeptide is Holliday junction branch migration complex subunit RuvB (Clostridioides difficile (strain 630) (Peptoclostridium difficile)).